The primary structure comprises 587 residues: Complement component C8 beta chain (587 aa).

Positions 1 to 31 are cleaved as a signal peptide; it reads MNHKLKPTVGLGYCLLCAALCLLLLRDVAIA. Positions 32-44 are excised as a propeptide; that stretch reads GSGEEPSGVREAR. The TSP type-1 1 domain maps to 56-111; the sequence is DCVQSEWSSWTRCDVCRKKRYRYAKLVQPSQFGGEPCHVQGKEVEPCSPPSRYDCT. 5 disulfides stabilise this stretch: Cys-57/Cys-92, Cys-68/Cys-102, Cys-71/Cys-110, Cys-118/Cys-129, and Cys-123/Cys-142. Trp-62 and Trp-65 each carry a C-linked (Man) tryptophan glycan. The LDL-receptor class A domain maps to 117–159; sequence LCEGFLCTYTGRCVPIDLRCNGDDDCGDWSAEKGSPKVPKACK. Residues Leu-134, Asn-137, Asp-139, Asp-141, and Glu-148 each contribute to the Ca(2+) site. Positions 154-500 constitute an MACPF domain; that stretch reads VPKACKQEAQ…EYLEESSSCR (347 aa). A disulfide bridge connects residues Cys-158 and Cys-196. Transmembrane regions (beta stranded) follow at residues 248-255, 258-265, 375-382, and 388-395; these read TTVSIGFA, GVAEFGFN, EQIVLKVG, and VYVTVGLE. Cystine bridges form between Cys-374/Cys-399, Cys-499/Cys-546, Cys-501/Cys-517, Cys-504/Cys-519, and Cys-521/Cys-530. Positions 501 to 531 constitute an EGF-like domain; that stretch reads CAPCRNNGLAVLKGTRCECVCPSGYSGLGCE. In terms of domain architecture, TSP type-1 2 spans 541–587; the sequence is DGSWSCWGSWSPCRGRSKTRSRQCNNPAPSSGGIACRGLQMETTDCF. C-linked (Man) tryptophan glycosylation is found at Trp-547 and Trp-550. A disulfide bridge links Cys-553 with Cys-586.

Belongs to the complement C6/C7/C8/C9 family. Heterotrimer of 3 chains: alpha (C8A), beta (C8B) and gamma (C8G); the alpha and gamma chains are disulfide bonded. Component of the membrane attack complex (MAC), composed of complement C5b, C6, C7, C8A, C8B, C8G and multiple copies of the pore-forming subunit C9.

The protein localises to the secreted. The protein resides in the target cell membrane. Functionally, component of the membrane attack complex (MAC), a multiprotein complex activated by the complement cascade, which inserts into a target cell membrane and forms a pore, leading to target cell membrane rupture and cell lysis. The MAC is initiated by proteolytic cleavage of C5 into complement C5b in response to the classical, alternative, lectin and GZMK complement pathways. The complement pathways consist in a cascade of proteins that leads to phagocytosis and breakdown of pathogens and signaling that strengthens the adaptive immune system. C8B, together with C8A and C8G, inserts into the target membrane, but does not form pores by itself. During MAC assembly, associates with C5b, C6 and C7 to form the C5b8 intermediate complex that inserts into the target membrane and traverses the bilayer increasing membrane rigidity. This chain is Complement component C8 beta chain (c8b), found in Oncorhynchus mykiss (Rainbow trout).